The primary structure comprises 321 residues: MGGMSENTPRYASGVALVNVVISGEHAGTVLDAWFPAPSLTQTPDLSIADELEDLAVEHPARNARTEVRSASINLDEAPEDAVDAYLRLHLLSHTLVRPNELNLDGLFGTLANVAWTNHGPVLAAEFQKLAIGLRKLGHLSVSHIDKFPRLVDYVVPAGVRIGDGDRLRLGAHLASGTTVMHEGFVNFNAGTLGTSMVEGRISQGVVVGDGSDVGGGASTMGTLSGGGKKRVSIGERSLLGAESGIGIALGDDCVVEAGLYVTAGSRVSVLLPGQEARVVKAAELSGVSNLLFRRNSLSGAIEVLPRAKNTVELNEALHLN.

Residues Asp166 and Glu183 each coordinate Mg(2+). Glu199 functions as the Acyl-anhydride intermediate in the catalytic mechanism. Residues Arg201, Gly216, Ser219, Ala242, 257-258 (EA), Gly265, Lys281, and 294-297 (RRNS) each bind succinyl-CoA.

It belongs to the type 2 tetrahydrodipicolinate N-succinyltransferase family. Homotrimer.

Its subcellular location is the cytoplasm. It catalyses the reaction (S)-2,3,4,5-tetrahydrodipicolinate + succinyl-CoA + H2O = (S)-2-succinylamino-6-oxoheptanedioate + CoA. It functions in the pathway amino-acid biosynthesis; L-lysine biosynthesis via DAP pathway; LL-2,6-diaminopimelate from (S)-tetrahydrodipicolinate (succinylase route): step 1/3. Functionally, catalyzes the conversion of the cyclic tetrahydrodipicolinate (THDP) into the acyclic N-succinyl-L-2-amino-6-oxopimelate using succinyl-CoA. The polypeptide is 2,3,4,5-tetrahydropyridine-2,6-dicarboxylate N-succinyltransferase (Rothia mucilaginosa (strain DY-18) (Stomatococcus mucilaginosus)).